Here is a 343-residue protein sequence, read N- to C-terminus: 3-hydroxy-3-methylglutaryl-CoA lyase, cytoplasmic (343 aa).

A lipid anchor (N-myristoyl glycine) is attached at Gly2. A Pyruvate carboxyltransferase domain is found at 48-315 (VKIVEVGPRD…NTGVDLYKVM (268 aa)). Residue Arg56 participates in substrate binding. Positions 57, 248, and 250 each coordinate a divalent metal cation. The active site involves Cys281. An a divalent metal cation-binding site is contributed by Asn290.

It belongs to the HMG-CoA lyase family. Requires a divalent metal cation as cofactor.

It is found in the cytoplasm. The protein localises to the cytosol. It localises to the endoplasmic reticulum membrane. It catalyses the reaction (3S)-3-hydroxy-3-methylglutaryl-CoA = acetoacetate + acetyl-CoA. The protein operates within metabolic intermediate metabolism; (S)-3-hydroxy-3-methylglutaryl-CoA degradation; acetoacetate from (S)-3-hydroxy-3-methylglutaryl-CoA: step 1/1. In terms of biological role, non-mitochondrial 3-hydroxy-3-methylglutaryl-CoA lyase that catalyzes a cation-dependent cleavage of (S)-3-hydroxy-3-methylglutaryl-CoA into acetyl-CoA and acetoacetate, a key step in ketogenesis, the products of which support energy production in nonhepatic animal tissues. This is 3-hydroxy-3-methylglutaryl-CoA lyase, cytoplasmic (Hmgcll1) from Mus musculus (Mouse).